A 236-amino-acid polypeptide reads, in one-letter code: Small ribosomal subunit protein eS6 (236 aa).

This sequence belongs to the eukaryotic ribosomal protein eS6 family. As to quaternary structure, component of the small ribosomal subunit. Part of the small subunit (SSU) processome, composed of more than 70 proteins and the RNA chaperone small nucleolar RNA (snoRNA) U3. Ribosomal protein S6 is the major substrate of protein kinases in eukaryote ribosomes.

It is found in the cytoplasm. The protein resides in the nucleus. Its subcellular location is the nucleolus. Functionally, component of the 40S small ribosomal subunit. Plays an important role in controlling cell growth and proliferation through the selective translation of particular classes of mRNA. Part of the small subunit (SSU) processome, first precursor of the small eukaryotic ribosomal subunit. During the assembly of the SSU processome in the nucleolus, many ribosome biogenesis factors, an RNA chaperone and ribosomal proteins associate with the nascent pre-rRNA and work in concert to generate RNA folding, modifications, rearrangements and cleavage as well as targeted degradation of pre-ribosomal RNA by the RNA exosome. The sequence is that of Small ribosomal subunit protein eS6 (rps6) from Dictyostelium discoideum (Social amoeba).